Reading from the N-terminus, the 412-residue chain is Phytoene synthase 1, chloroplastic (412 aa).

The N-terminal 129 residues, methionine 1–alanine 129, are a transit peptide targeting the chloroplast.

Belongs to the phytoene/squalene synthase family. As to quaternary structure, monomer. Interacts with SGR1.

The protein resides in the plastid. Its subcellular location is the chloroplast. It carries out the reaction 2 (2E,6E,10E)-geranylgeranyl diphosphate = 15-cis-phytoene + 2 diphosphate. Its pathway is carotenoid biosynthesis; phytoene biosynthesis; all-trans-phytoene from geranylgeranyl diphosphate: step 1/1. Functionally, catalyzes the reaction from prephytoene diphosphate to phytoene. The chain is Phytoene synthase 1, chloroplastic (PSY1) from Solanum lycopersicum (Tomato).